The chain runs to 233 residues: MSKLGKFFKGGGSSKSRAAPSPQEALVRLRETEEMLGKKQEYLENRIQREIALAKKHGTQNKRAALQALKRKKRFEKQLTQIDGTLSTIEFQREALENSHTNTEVLRNMGFAAKAMKSVHENMDLNKIDDLMQEITEQQDIAQEISEAFSQRVGFGDDFDEDELMAELEELEQEELNKKMTNIRLPNVPSSSLPAQPNRKPGMSSTARRSRAASSQRAEEEDDDIKQLAAWAT.

2 disordered regions span residues 1-24 (MSKL…SPQE) and 173-233 (QEEL…AWAT). Residues 1–153 (MSKLGKFFKG…EISEAFSQRV (153 aa)) are intramolecular interaction with C-terminus. The stretch at 125–183 (LNKIDDLMQEITEQQDIAQEISEAFSQRVGFGDDFDEDELMAELEELEQEELNKKMTNI) forms a coiled coil. Positions 154–233 (GFGDDFDEDE…DIKQLAAWAT (80 aa)) are intramolecular interaction with N-terminus. Residues 204–216 (SSTARRSRAASSQ) show a composition bias toward low complexity. Serine 210 is modified (phosphoserine; by AURKB).

It belongs to the SNF7 family. Probable core component of the endosomal sorting required for transport complex III (ESCRT-III). ESCRT-III components are thought to multimerize to form a flat lattice on the perimeter membrane of the endosome. Several assembly forms of ESCRT-III may exist that interact and act sequentially. Self-associates. Interacts with CHMP2A. Interacts with CHMP4A. Interacts with CHMP4B. Interacts with CHMP6. Interacts with VPS4A. Interacts with PDCD6IP; the interaction is direct. Post-translationally, phosphorylated at Ser-210 by AURKB during cytokinesis: together with ZFYVE19/ANCHR, phosphorylated CHMP4C retains abscission-competent VPS4 (VPS4A and/or VPS4B) at the midbody ring until abscission checkpoint signaling is terminated at late cytokinesis. Expressed in heart, spleen and kidney.

It localises to the cytoplasm. The protein localises to the cytosol. It is found in the late endosome membrane. Its subcellular location is the midbody. The protein resides in the midbody ring. In terms of biological role, probable core component of the endosomal sorting required for transport complex III (ESCRT-III) which is involved in multivesicular bodies (MVBs) formation and sorting of endosomal cargo proteins into MVBs. MVBs contain intraluminal vesicles (ILVs) that are generated by invagination and scission from the limiting membrane of the endosome and mostly are delivered to lysosomes enabling degradation of membrane proteins, such as stimulated growth factor receptors, lysosomal enzymes and lipids. The MVB pathway appears to require the sequential function of ESCRT-O, -I,-II and -III complexes. ESCRT-III proteins mostly dissociate from the invaginating membrane before the ILV is released. The ESCRT machinery also functions in topologically equivalent membrane fission events, such as the terminal stages of cytokinesis and the budding of enveloped viruses (HIV-1 and other lentiviruses). Key component of the cytokinesis checkpoint, a process required to delay abscission to prevent both premature resolution of intercellular chromosome bridges and accumulation of DNA damage: upon phosphorylation by AURKB, together with ZFYVE19/ANCHR, retains abscission-competent VPS4 (VPS4A and/or VPS4B) at the midbody ring until abscission checkpoint signaling is terminated at late cytokinesis. Deactivation of AURKB results in dephosphorylation of CHMP4C followed by its dissociation from ANCHR and VPS4 and subsequent abscission. ESCRT-III proteins are believed to mediate the necessary vesicle extrusion and/or membrane fission activities, possibly in conjunction with the AAA ATPase VPS4. Involved in HIV-1 p6- and p9-dependent virus release. CHMP4A/B/C are required for the exosomal release of SDCBP, CD63 and syndecan. The protein is Charged multivesicular body protein 4c (CHMP4C) of Homo sapiens (Human).